Consider the following 313-residue polypeptide: Ribosomal protein L11 methyltransferase (313 aa).

S-adenosyl-L-methionine is bound by residues Thr164, Gly185, Asp207, and Asn249.

This sequence belongs to the methyltransferase superfamily. PrmA family.

The protein resides in the cytoplasm. The catalysed reaction is L-lysyl-[protein] + 3 S-adenosyl-L-methionine = N(6),N(6),N(6)-trimethyl-L-lysyl-[protein] + 3 S-adenosyl-L-homocysteine + 3 H(+). Methylates ribosomal protein L11. This is Ribosomal protein L11 methyltransferase from Clostridium perfringens (strain 13 / Type A).